A 366-amino-acid chain; its full sequence is tRNA/tmRNA (uracil-C(5))-methyltransferase (366 aa).

S-adenosyl-L-methionine contacts are provided by glutamine 190, tyrosine 218, asparagine 223, glutamate 239, and aspartate 299. Cysteine 324 (nucleophile) is an active-site residue. The active-site Proton acceptor is the glutamate 358.

This sequence belongs to the class I-like SAM-binding methyltransferase superfamily. RNA M5U methyltransferase family. TrmA subfamily.

It catalyses the reaction uridine(54) in tRNA + S-adenosyl-L-methionine = 5-methyluridine(54) in tRNA + S-adenosyl-L-homocysteine + H(+). The enzyme catalyses uridine(341) in tmRNA + S-adenosyl-L-methionine = 5-methyluridine(341) in tmRNA + S-adenosyl-L-homocysteine + H(+). Its function is as follows. Dual-specificity methyltransferase that catalyzes the formation of 5-methyluridine at position 54 (m5U54) in all tRNAs, and that of position 341 (m5U341) in tmRNA (transfer-mRNA). The protein is tRNA/tmRNA (uracil-C(5))-methyltransferase of Citrobacter koseri (strain ATCC BAA-895 / CDC 4225-83 / SGSC4696).